A 322-amino-acid polypeptide reads, in one-letter code: uncharacterized protein (322 aa).

This is an uncharacterized protein from Acanthamoeba polyphaga (Amoeba).